We begin with the raw amino-acid sequence, 195 residues long: Morphogenetic protein (195 aa).

Assembly factor active in membrane morphogenesis. The sequence is that of Morphogenetic protein (P12) from Pseudomonas phage phi6 (Bacteriophage phi-6).